The following is a 290-amino-acid chain: Enoyl-CoA hydratase, mitochondrial (290 aa).

The N-terminal 27 residues, 1-27, are a transit peptide targeting the mitochondrion; sequence MATLRVLLSCVRGPLRPPVRCPAWRPF. Position 46 is a phosphothreonine (Thr-46). 98–101 serves as a coordination point for substrate; the sequence is ADIK. Position 101 is an N6-acetyllysine; alternate (Lys-101). N6-succinyllysine; alternate is present on Lys-101. Ser-114 is subject to Phosphoserine. Residue Lys-115 is modified to N6-acetyllysine; alternate. Lys-115 bears the N6-succinyllysine; alternate mark. Residue Lys-118 is modified to N6-acetyllysine. A substrate-binding site is contributed by Gly-141. Lys-204 bears the N6-succinyllysine mark. N6-acetyllysine is present on Lys-211.

This sequence belongs to the enoyl-CoA hydratase/isomerase family. As to quaternary structure, homohexamer; dimer of trimers.

The protein resides in the mitochondrion matrix. The catalysed reaction is a (3S)-3-hydroxyacyl-CoA = a (2E)-enoyl-CoA + H2O. The enzyme catalyses a (3E)-enoyl-CoA = a 4-saturated (2E)-enoyl-CoA. It catalyses the reaction (3E)-hexenoyl-CoA = (2E)-hexenoyl-CoA. It carries out the reaction (3S)-3-hydroxybutanoyl-CoA = (2E)-butenoyl-CoA + H2O. The catalysed reaction is 3-hydroxyisovaleryl-CoA = 3-methylbut-2-enoyl-CoA + H2O. The enzyme catalyses 3-hydroxypropanoyl-CoA = acryloyl-CoA + H2O. It catalyses the reaction 3-hydroxybutanoyl-CoA = (2E)-butenoyl-CoA + H2O. It carries out the reaction 2-methylpropenoyl-CoA + H2O = (S)-3-hydroxyisobutanoyl-CoA. The catalysed reaction is (3S)-hydroxyhexanoyl-CoA = (2E)-hexenoyl-CoA + H2O. The enzyme catalyses (3S)-hydroxydecanoyl-CoA = (2E)-decenoyl-CoA + H2O. It participates in lipid metabolism; fatty acid beta-oxidation. In terms of biological role, converts unsaturated trans-2-enoyl-CoA species ((2E)-enoyl-CoA) to the corresponding (3S)-3-hydroxyacyl-CoA species through addition of a water molecule to the double bond. Catalyzes the hydration of medium- and short-chained fatty enoyl-CoA thioesters from 4 carbons long (C4) up to C16. Has high substrate specificity for crotonyl-CoA ((2E)-butenoyl-CoA) and moderate specificity for acryloyl-CoA, 3-methylcrotonyl-CoA (3-methyl-(2E)-butenoyl-CoA) and methacrylyl-CoA ((2E)-2-methylpropenoyl-CoA). Can bind tiglyl-CoA (2-methylcrotonoyl-CoA), but hydrates only a small amount of this substrate. Plays a key role in the beta-oxidation spiral of short- and medium-chain fatty acid oxidation. At a lower rate than the hydratase reaction, catalyzes the isomerase reaction of trans-3-enoyl-CoA species (such as (3E)-hexenoyl-CoA) to trans-2-enoyl-CoA species (such as (2E)-hexenoyl-CoA), which are subsequently hydrated to 3(S)-3-hydroxyacyl-CoA species (such as (3S)-hydroxyhexanoyl-CoA). This chain is Enoyl-CoA hydratase, mitochondrial (ECHS1), found in Pongo abelii (Sumatran orangutan).